A 498-amino-acid polypeptide reads, in one-letter code: Alpha-amylase A (498 aa).

Positions 1–21 (MMVAWWSLFLYGLQVAAPALA) are cleaved as a signal peptide. The cysteines at positions 51 and 59 are disulfide-linked. Residues Gln56 and Trp104 each contribute to the substrate site. Position 142 (Asn142) interacts with Ca(2+). Residue His143 coordinates substrate. Cys171 and Cys185 are disulfide-bonded. Residues Glu183 and Asp196 each contribute to the Ca(2+) site. N-linked (GlcNAc...) asparagine glycosylation is present at Asn218. Residue Arg225 participates in substrate binding. Residues Asp227, His231, and Glu251 each contribute to the Ca(2+) site. Catalysis depends on Asp227, which acts as the Nucleophile. 230–231 (KH) lines the substrate pocket. Glu251 (proton donor) is an active-site residue. Gly255 provides a ligand contact to substrate. An intrachain disulfide couples Cys261 to Cys304. Substrate contacts are provided by Asp318 and Arg365. Cys461 and Cys496 are oxidised to a cystine.

It belongs to the glycosyl hydrolase 13 family. The cofactor is Ca(2+).

It carries out the reaction Endohydrolysis of (1-&gt;4)-alpha-D-glucosidic linkages in polysaccharides containing three or more (1-&gt;4)-alpha-linked D-glucose units.. In Aspergillus awamori (Black koji mold), this protein is Alpha-amylase A (amyA).